The chain runs to 617 residues: Chaperone protein DnaK (617 aa).

Residue threonine 174 is modified to Phosphothreonine; by autocatalysis. Residues 575-592 are compositionally biased toward low complexity; it reads AQAQQQAQQQAQGQQGAQ. A disordered region spans residues 575-617; that stretch reads AQAQQQAQQQAQGQQGAQTDNQTGQNDGKTIDVDYEEVDDDDK. The span at 593-602 shows a compositional bias: polar residues; sequence TDNQTGQNDG. The segment covering 607–617 has biased composition (acidic residues); sequence VDYEEVDDDDK.

It belongs to the heat shock protein 70 family.

Its function is as follows. Acts as a chaperone. This chain is Chaperone protein DnaK, found in Halothermothrix orenii (strain H 168 / OCM 544 / DSM 9562).